The following is a 149-amino-acid chain: Large ribosomal subunit protein bL9 (149 aa).

It belongs to the bacterial ribosomal protein bL9 family.

In terms of biological role, binds to the 23S rRNA. The chain is Large ribosomal subunit protein bL9 from Xylella fastidiosa (strain 9a5c).